A 417-amino-acid chain; its full sequence is UDP-N-acetylglucosamine 1-carboxyvinyltransferase (417 aa).

Position 22–23 (22–23) interacts with phosphoenolpyruvate; that stretch reads KN. Arg91 provides a ligand contact to UDP-N-acetyl-alpha-D-glucosamine. The active-site Proton donor is Cys115. At Cys115 the chain carries 2-(S-cysteinyl)pyruvic acid O-phosphothioketal. UDP-N-acetyl-alpha-D-glucosamine contacts are provided by residues 120–124, Asp304, and Ile326; that span reads RPVDL.

The protein belongs to the EPSP synthase family. MurA subfamily.

It is found in the cytoplasm. It catalyses the reaction phosphoenolpyruvate + UDP-N-acetyl-alpha-D-glucosamine = UDP-N-acetyl-3-O-(1-carboxyvinyl)-alpha-D-glucosamine + phosphate. It participates in cell wall biogenesis; peptidoglycan biosynthesis. Its function is as follows. Cell wall formation. Adds enolpyruvyl to UDP-N-acetylglucosamine. The sequence is that of UDP-N-acetylglucosamine 1-carboxyvinyltransferase from Nitratidesulfovibrio vulgaris (strain DSM 19637 / Miyazaki F) (Desulfovibrio vulgaris).